We begin with the raw amino-acid sequence, 1302 residues long: Neuroglian (1302 aa).

Residues 1-23 (MWRQSTILAALLVALLCAGSAES) form the signal peptide. Topologically, residues 24 to 1138 (KGNRPPRITK…ANAGWFIGMM (1115 aa)) are extracellular. 6 consecutive Ig-like C2-type domains span residues 29–133 (PRIT…AELN), 134–225 (AFKD…YKIG), 245–330 (PPVR…QSFS), 339–426 (PYFT…VYLN), 432–524 (PTIS…TRIT), and 521–610 (TRIT…ANLI). Disulfide bonds link cysteine 59-cysteine 111, cysteine 155-cysteine 212, cysteine 268-cysteine 317, and cysteine 360-cysteine 410. Residues asparagine 182 and asparagine 198 are each glycosylated (N-linked (GlcNAc...) asparagine). N-linked (GlcNAc...) asparagine glycans are attached at residues asparagine 411 and asparagine 448. Fibronectin type-III domains follow at residues 614–711 (VPNA…TQPD), 716–813 (NPDN…SGED), 818–915 (APTN…TPEG), 916–1017 (VPSP…LKDA), and 1021–1119 (APAT…TVEG). An intrachain disulfide couples cysteine 625 to cysteine 706. Residues asparagine 652 and asparagine 683 are each glycosylated (N-linked (GlcNAc...) asparagine). The N-linked (GlcNAc...) asparagine glycan is linked to asparagine 821. Residue asparagine 1125 is glycosylated (N-linked (GlcNAc...) asparagine). The chain crosses the membrane as a helical span at residues 1139-1154 (LALAFIIILFIIICII). Topologically, residues 1155–1302 (RRNRGGKYDV…AAAGAVATYV (148 aa)) are cytoplasmic. Basic and acidic residues predominate over residues 1172-1182 (GRRDYPEEGGF). 2 disordered regions span residues 1172–1223 (GRRD…GDTG) and 1236–1291 (VPGK…ASNG). Positions 1188-1203 (PLDNKSAGRQSVSSAN) are enriched in polar residues. Positions 1253–1275 (AAAHQAAPTAGGSGAAGSAAAAG) are enriched in low complexity.

Forms a complex with Nrx-IV/Nrx and Cont. Forms a complex composed of septate junction proteins Nrx-IV/Nrx, Tsf2/MTf, Cont and Nrg during late embryogenesis. In terms of tissue distribution, restricted to the surface of neurons and glia in the developing nervous system. As to expression, restricted to non-neuronal tissues.

The protein localises to the cell membrane. Its subcellular location is the cell junction. It is found in the septate junction. Its function is as follows. Essential for septate junctions. Septate junctions, which are the equivalent of vertebrate tight junctions, are characterized by regular arrays of transverse structures that span the intermembrane space and form a physical barrier to diffusion. Required for formation of the hemolymph-brain barrier (the insect blood-brain barrier). Vital for embryonic development. Involved in the targeting for degradation or recycling of certain septate junction components, including kune and bou/boudin, by regulating their endocytosis. In terms of biological role, may play a role in neural and glial cell adhesion in the developing embryo. May be a more general cell adhesion molecule involved in non-neuronal tissues and imaginal disk morphogenesis. The protein is Neuroglian (Nrg) of Drosophila melanogaster (Fruit fly).